We begin with the raw amino-acid sequence, 250 residues long: L-cystine transport system ATP-binding protein TcyN (250 aa).

The ABC transporter domain occupies 4 to 244 (IEVKNLVKKF…PEQPRTRQFL (241 aa)). 36–43 (GPSGSGKT) is a binding site for ATP.

This sequence belongs to the ABC transporter superfamily. As to quaternary structure, the complex is composed of two ATP-binding proteins (TcyN), two transmembrane proteins (TcyL) and a solute-binding protein (TcyJ).

It is found in the cell inner membrane. It catalyses the reaction L-cystine(out) + ATP + H2O = L-cystine(in) + ADP + phosphate + H(+). The enzyme catalyses D-cystine(out) + ATP + H2O = D-cystine(in) + ADP + phosphate + H(+). Its activity is regulated as follows. The TcyJLN system is inhibited by L-cystine, L-cysteine, DL-2,6-diaminopimelic acid and L-cystathionine, and is stimulated by D-cysteine. Its function is as follows. Part of the ABC transporter complex TcyJLN involved in L-cystine import. This high affinity cystine transporter is involved in resistance to oxidative stress by forming a L-cysteine/L-cystine shuttle system with the EamA transporter, which exports L-cysteine as reducing equivalents to the periplasm to prevent the cells from oxidative stress. Exported L-cysteine can reduce the periplasmic hydrogen peroxide to water, and then generated L-cystine is imported back into the cytoplasm via the TcyJLN complex. Functions at low cystine concentrations. The system can also transport L-cysteine, diaminopimelic acid (DAP), djenkolate, lanthionine, D-cystine, homocystine, and it mediates accumulation of the toxic compounds L-selenaproline (SCA) and L-selenocystine (SeCys). Could also facilitate threonine efflux. Responsible for energy coupling to the transport system. The sequence is that of L-cystine transport system ATP-binding protein TcyN from Escherichia coli (strain K12).